Reading from the N-terminus, the 652-residue chain is Acetyl-coenzyme A synthetase (652 aa).

CoA-binding positions include 191 to 194 (RAGR), Thr-311, and Asn-335. Residues 387–389 (GEP), 411–416 (DTWWQT), Asp-500, and Arg-515 each bind ATP. Ser-523 lines the CoA pocket. An ATP-binding site is contributed by Arg-526. 3 residues coordinate Mg(2+): Val-537, His-539, and Ile-542. Arg-584 contacts CoA. Residue Lys-609 is modified to N6-acetyllysine; by autocatalysis.

The protein belongs to the ATP-dependent AMP-binding enzyme family. As to quaternary structure, forms a 1:1 complex with CobB/NAD-dependent deacetylase. Mg(2+) is required as a cofactor. In terms of processing, autoacetylated. Deacetylation by CobB activates the enzyme.

The enzyme catalyses acetate + ATP + CoA = acetyl-CoA + AMP + diphosphate. In terms of biological role, catalyzes the conversion of acetate into acetyl-CoA (AcCoA), an essential intermediate at the junction of anabolic and catabolic pathways. Acs undergoes a two-step reaction. In the first half reaction, Acs combines acetate with ATP to form acetyl-adenylate (AcAMP) intermediate. In the second half reaction, it can then transfer the acetyl group from AcAMP to the sulfhydryl group of CoA, forming the product AcCoA. Enables the cell to use acetate during aerobic growth to generate energy via the TCA cycle, and biosynthetic compounds via the glyoxylate shunt. Acetylates CheY, the response regulator involved in flagellar movement and chemotaxis. This Escherichia coli (strain K12) protein is Acetyl-coenzyme A synthetase.